The following is a 412-amino-acid chain: Arginine biosynthesis bifunctional protein ArgJ (412 aa).

Threonine 155, lysine 181, threonine 192, glutamate 279, asparagine 407, and serine 412 together coordinate substrate. Threonine 192 serves as the catalytic Nucleophile.

The protein belongs to the ArgJ family. In terms of assembly, heterotetramer of two alpha and two beta chains.

It localises to the cytoplasm. It catalyses the reaction N(2)-acetyl-L-ornithine + L-glutamate = N-acetyl-L-glutamate + L-ornithine. The enzyme catalyses L-glutamate + acetyl-CoA = N-acetyl-L-glutamate + CoA + H(+). It participates in amino-acid biosynthesis; L-arginine biosynthesis; L-ornithine and N-acetyl-L-glutamate from L-glutamate and N(2)-acetyl-L-ornithine (cyclic): step 1/1. Its pathway is amino-acid biosynthesis; L-arginine biosynthesis; N(2)-acetyl-L-ornithine from L-glutamate: step 1/4. In terms of biological role, catalyzes two activities which are involved in the cyclic version of arginine biosynthesis: the synthesis of N-acetylglutamate from glutamate and acetyl-CoA as the acetyl donor, and of ornithine by transacetylation between N(2)-acetylornithine and glutamate. The sequence is that of Arginine biosynthesis bifunctional protein ArgJ from Aromatoleum aromaticum (strain DSM 19018 / LMG 30748 / EbN1) (Azoarcus sp. (strain EbN1)).